Here is a 364-residue protein sequence, read N- to C-terminus: Chorismate synthase (364 aa).

Arginine 47 contacts NADP(+). Residues 124-126 (RAS), glycine 287, 302-306 (KPTAT), and arginine 328 each bind FMN.

The protein belongs to the chorismate synthase family. In terms of assembly, homotetramer. FMNH2 serves as cofactor.

It carries out the reaction 5-O-(1-carboxyvinyl)-3-phosphoshikimate = chorismate + phosphate. The protein operates within metabolic intermediate biosynthesis; chorismate biosynthesis; chorismate from D-erythrose 4-phosphate and phosphoenolpyruvate: step 7/7. In terms of biological role, catalyzes the anti-1,4-elimination of the C-3 phosphate and the C-6 proR hydrogen from 5-enolpyruvylshikimate-3-phosphate (EPSP) to yield chorismate, which is the branch point compound that serves as the starting substrate for the three terminal pathways of aromatic amino acid biosynthesis. This reaction introduces a second double bond into the aromatic ring system. This Prochlorococcus marinus subsp. pastoris (strain CCMP1986 / NIES-2087 / MED4) protein is Chorismate synthase.